The following is a 539-amino-acid chain: Phosphoenolpyruvate carboxykinase (ATP) (539 aa).

3 residues coordinate substrate: arginine 64, tyrosine 206, and lysine 212. ATP-binding positions include lysine 212, histidine 231, and 247-255 (GLSGTGKTT). Mn(2+) contacts are provided by lysine 212 and histidine 231. Aspartate 268 is a Mn(2+) binding site. Residues glutamate 296, arginine 332, 448-449 (RI), and threonine 454 contribute to the ATP site. Residue arginine 332 participates in substrate binding.

Belongs to the phosphoenolpyruvate carboxykinase (ATP) family. Monomer. Mn(2+) serves as cofactor.

The protein localises to the cytoplasm. The enzyme catalyses oxaloacetate + ATP = phosphoenolpyruvate + ADP + CO2. It functions in the pathway carbohydrate biosynthesis; gluconeogenesis. Involved in the gluconeogenesis. Catalyzes the conversion of oxaloacetate (OAA) to phosphoenolpyruvate (PEP) through direct phosphoryl transfer between the nucleoside triphosphate and OAA. The sequence is that of Phosphoenolpyruvate carboxykinase (ATP) from Salmonella choleraesuis (strain SC-B67).